A 236-amino-acid chain; its full sequence is Flagellar L-ring protein (236 aa).

The signal sequence occupies residues 1–16; it reads MRMRITAILAAGLLAG. A lipid anchor (N-palmitoyl cysteine) is attached at C17. C17 carries S-diacylglycerol cysteine lipidation. Residues 96-143 form a disordered region; sequence ENETDRSRKNSSGFNLGASGESQTSDFAWSGDLEYGSNTKTEGDGKTE. The segment covering 105-122 has biased composition (polar residues); that stretch reads NSSGFNLGASGESQTSDF.

The protein belongs to the FlgH family. In terms of assembly, the basal body constitutes a major portion of the flagellar organelle and consists of four rings (L,P,S, and M) mounted on a central rod.

The protein resides in the cell outer membrane. The protein localises to the bacterial flagellum basal body. Its function is as follows. Assembles around the rod to form the L-ring and probably protects the motor/basal body from shearing forces during rotation. The chain is Flagellar L-ring protein from Sinorhizobium medicae (strain WSM419) (Ensifer medicae).